The chain runs to 226 residues: ATP-dependent Clp protease proteolytic subunit 4 (226 aa).

Catalysis depends on S122, which acts as the Nucleophile. The active site involves H147.

This sequence belongs to the peptidase S14 family. In terms of assembly, fourteen ClpP subunits assemble into 2 heptameric rings which stack back to back to give a disk-like structure with a central cavity, resembling the structure of eukaryotic proteasomes.

The protein resides in the cytoplasm. It carries out the reaction Hydrolysis of proteins to small peptides in the presence of ATP and magnesium. alpha-casein is the usual test substrate. In the absence of ATP, only oligopeptides shorter than five residues are hydrolyzed (such as succinyl-Leu-Tyr-|-NHMec, and Leu-Tyr-Leu-|-Tyr-Trp, in which cleavage of the -Tyr-|-Leu- and -Tyr-|-Trp bonds also occurs).. Cleaves peptides in various proteins in a process that requires ATP hydrolysis. Has a chymotrypsin-like activity. Plays a major role in the degradation of misfolded proteins. The chain is ATP-dependent Clp protease proteolytic subunit 4 from Streptomyces avermitilis (strain ATCC 31267 / DSM 46492 / JCM 5070 / NBRC 14893 / NCIMB 12804 / NRRL 8165 / MA-4680).